The sequence spans 163 residues: Phosphopantetheine adenylyltransferase (163 aa).

Threonine 10 is a binding site for substrate. ATP-binding positions include 10-11 (TF) and histidine 18. Positions 42, 74, and 88 each coordinate substrate. ATP-binding positions include 89–91 (GLR), glutamate 99, and 124–130 (NSFISST).

It belongs to the bacterial CoaD family. As to quaternary structure, homohexamer. Requires Mg(2+) as cofactor.

It localises to the cytoplasm. The enzyme catalyses (R)-4'-phosphopantetheine + ATP + H(+) = 3'-dephospho-CoA + diphosphate. It participates in cofactor biosynthesis; coenzyme A biosynthesis; CoA from (R)-pantothenate: step 4/5. Its function is as follows. Reversibly transfers an adenylyl group from ATP to 4'-phosphopantetheine, yielding dephospho-CoA (dPCoA) and pyrophosphate. This is Phosphopantetheine adenylyltransferase from Shewanella oneidensis (strain ATCC 700550 / JCM 31522 / CIP 106686 / LMG 19005 / NCIMB 14063 / MR-1).